The chain runs to 140 residues: Tumor protein D55 (140 aa).

Positions 1 to 28 are disordered; it reads MPHARTETSVGTYESHSTSELEDLTEPE. Residues 7-18 show a composition bias toward polar residues; the sequence is ETSVGTYESHST. Positions 28–57 form a coiled coil; that stretch reads EQRELKTKLTKLEAEIVTLRHVLAAKERRC.

It belongs to the TPD52 family. As to quaternary structure, interacts with TPD52L2. In terms of tissue distribution, specifically expressed in testis. Expressed at 5.6-fold higher levels in adult testis than in fetal testis.

This is Tumor protein D55 (TPD52L3) from Homo sapiens (Human).